A 427-amino-acid polypeptide reads, in one-letter code: Ribosomal protein uS12 methylthiotransferase RimO (427 aa).

The 116-residue stretch at 1–116 folds into the MTTase N-terminal domain; sequence MNFYVEVLGC…IATHIGKRNV (116 aa). Cys-10, Cys-46, Cys-79, Cys-145, Cys-149, and Cys-152 together coordinate [4Fe-4S] cluster. The Radical SAM core domain occupies 131–360; the sequence is VDNGQYAYVK…MDIQSQISFE (230 aa). Residues 363-426 form the TRAM domain; that stretch reads EKLVGKKLKV…IYDLEGEIVE (64 aa).

The protein belongs to the methylthiotransferase family. RimO subfamily. Requires [4Fe-4S] cluster as cofactor.

The protein localises to the cytoplasm. The enzyme catalyses L-aspartate(89)-[ribosomal protein uS12]-hydrogen + (sulfur carrier)-SH + AH2 + 2 S-adenosyl-L-methionine = 3-methylsulfanyl-L-aspartate(89)-[ribosomal protein uS12]-hydrogen + (sulfur carrier)-H + 5'-deoxyadenosine + L-methionine + A + S-adenosyl-L-homocysteine + 2 H(+). Its function is as follows. Catalyzes the methylthiolation of an aspartic acid residue of ribosomal protein uS12. This chain is Ribosomal protein uS12 methylthiotransferase RimO, found in Thermosipho melanesiensis (strain DSM 12029 / CIP 104789 / BI429).